Reading from the N-terminus, the 997-residue chain is Translation initiation factor IF-2 (997 aa).

Residues 36 to 415 (SMAGSLTTEE…ATQPLKAAKR (380 aa)) form a disordered region. 2 stretches are compositionally biased toward basic and acidic residues: residues 45–65 (EAAR…ERSG) and 94–107 (AREE…EKPA). A compositionally biased stretch (low complexity) spans 108-126 (AVEAPAQAEPVAEAPAASP). Residues 127–147 (HKVEEKAAPEAAKAEPAEKAK) are compositionally biased toward basic and acidic residues. The span at 151–162 (ARVVSAARVISR) shows a compositional bias: low complexity. A compositionally biased stretch (basic and acidic residues) spans 163–181 (PGEEEEKKPEPVVESKPEP). Low complexity predominate over residues 182-196 (VAEISPVAAALAARE). 2 stretches are compositionally biased toward basic and acidic residues: residues 197–214 (AAAR…EKGA) and 241–252 (PEARTEAWKDAD). The segment covering 300 to 309 (GRPGAPGGPR) has biased composition (gly residues). A compositionally biased stretch (pro residues) spans 316-335 (PPRPGGPRPSGPGGPRPAGG). The span at 378–388 (GGRRDDDDSQR) shows a compositional bias: basic and acidic residues. The span at 390–399 (NRGKGRRKGG) shows a compositional bias: basic residues. The 170-residue stretch at 496-665 (PRPPVVTIMG…ALQSEIMELK (170 aa)) folds into the tr-type G domain. A G1 region spans residues 505-512 (GHVDHGKT). Residue 505 to 512 (GHVDHGKT) coordinates GTP. A G2 region spans residues 530-534 (GITQH). Residues 551–554 (DTPG) are G3. Residues 551-555 (DTPGH) and 605-608 (NKMD) contribute to the GTP site. Residues 605-608 (NKMD) form a G4 region. Residues 641-643 (AAK) are G5.

This sequence belongs to the TRAFAC class translation factor GTPase superfamily. Classic translation factor GTPase family. IF-2 subfamily.

It is found in the cytoplasm. In terms of biological role, one of the essential components for the initiation of protein synthesis. Protects formylmethionyl-tRNA from spontaneous hydrolysis and promotes its binding to the 30S ribosomal subunits. Also involved in the hydrolysis of GTP during the formation of the 70S ribosomal complex. The protein is Translation initiation factor IF-2 of Desulfovibrio desulfuricans (strain ATCC 27774 / DSM 6949 / MB).